Consider the following 547-residue polypeptide: MAAKEIVFDQKARDAILKGVNTLADAVKVTLGPKGRNVVIEKSFGSPTITKDGVTVAKEIELENKFENMGAQMVKEVASKTSDVAGDGTTTATVLAQAIYREGSKLVAAGHNPMDVKRGIDKAVEAIVGELKKLSKPTKDHKEIAQVGIISANGDTTIGNIIAEAMEKVGKEGVITVEEAKGLETTLDVVEGMQFDRGYLSPYFVTDAERMEAVLEDAYILINEKKISNMKDLLPLLEQIARSGKPLIIVAEEVEGEALATLVVNKLRGTLHVCAVKAPGFGDRRKAMLEDIAILTGGRMIAEELGLKLEQVTLKDLGRAKRVTVDKDNTTIVDGAGKKEDIEARVKTIRAQIEETTSDYDREKLQERLAKLVGGVAVINVGAATETEMKEKKARVEDALHATRAAVEEGIVPGGGVAYLRCVKALEGVKVNEGEKVGLDIVRRAIEEPLRQISGNGGYEGSIVVNKVKEAKEAAFGFNAATGEYEDLVKAGVIDPTKVSRSALQNAASVASLMLTTMAMVAEKPKEESAAPAGGGMGGMGGMGGMM.

ATP-binding positions include 30–33 (TLGP), lysine 51, 87–91 (DGTTT), glycine 415, 479–481 (NAA), and aspartate 495. The interval 525-547 (PKEESAAPAGGGMGGMGGMGGMM) is disordered. Residues 533-547 (AGGGMGGMGGMGGMM) show a composition bias toward gly residues.

The protein belongs to the chaperonin (HSP60) family. In terms of assembly, forms a cylinder of 14 subunits composed of two heptameric rings stacked back-to-back. Interacts with the co-chaperonin GroES.

The protein localises to the cytoplasm. It catalyses the reaction ATP + H2O + a folded polypeptide = ADP + phosphate + an unfolded polypeptide.. Functionally, together with its co-chaperonin GroES, plays an essential role in assisting protein folding. The GroEL-GroES system forms a nano-cage that allows encapsulation of the non-native substrate proteins and provides a physical environment optimized to promote and accelerate protein folding. This is Chaperonin GroEL 2 from Anaeromyxobacter dehalogenans (strain 2CP-C).